The sequence spans 199 residues: Small ribosomal subunit protein uS2 (199 aa).

This sequence belongs to the universal ribosomal protein uS2 family.

In Thermoplasma acidophilum (strain ATCC 25905 / DSM 1728 / JCM 9062 / NBRC 15155 / AMRC-C165), this protein is Small ribosomal subunit protein uS2 (rps2).